A 189-amino-acid polypeptide reads, in one-letter code: Putative manganese efflux pump MntP (189 aa).

The next 6 helical transmembrane spans lie at 3 to 23, 41 to 61, 69 to 89, 105 to 125, 133 to 153, and 168 to 188; these read PISL…AALG, LIFG…GQVA, DHWI…YNGI, FWIL…VGVG, IVIA…IGVM, and IVGG…HLSA.

Belongs to the MntP (TC 9.B.29) family.

It localises to the cell inner membrane. In terms of biological role, probably functions as a manganese efflux pump. The sequence is that of Putative manganese efflux pump MntP from Pseudomonas savastanoi pv. phaseolicola (strain 1448A / Race 6) (Pseudomonas syringae pv. phaseolicola (strain 1448A / Race 6)).